The following is a 352-amino-acid chain: DNA-directed RNA polymerase subunit alpha (352 aa).

The tract at residues 1–236 is alpha N-terminal domain (alpha-NTD); it reads MTVNIRNWQE…DQLQVFVHFE (236 aa). An alpha C-terminal domain (alpha-CTD) region spans residues 257 to 352; it reads SDVNQLNRFL…AKKLEQELLG (96 aa).

The protein belongs to the RNA polymerase alpha chain family. Homodimer. The RNAP catalytic core consists of 2 alpha, 1 beta, 1 beta' and 1 omega subunit. When a sigma factor is associated with the core the holoenzyme is formed, which can initiate transcription.

The enzyme catalyses RNA(n) + a ribonucleoside 5'-triphosphate = RNA(n+1) + diphosphate. Functionally, DNA-dependent RNA polymerase catalyzes the transcription of DNA into RNA using the four ribonucleoside triphosphates as substrates. The protein is DNA-directed RNA polymerase subunit alpha of Sphingopyxis alaskensis (strain DSM 13593 / LMG 18877 / RB2256) (Sphingomonas alaskensis).